The primary structure comprises 160 residues: MSRRHAAEKRVILPDMKYNSILLSRFINNIMKKGKKALAEKIVYSAFNKIEKKHRVDPYQTFNNAMHNVKPHLEVTSVRVGGANYQVPTHVDERRGYALASRWIINAASKRSEKMMIDKLAEELFEASNNRGVAIKKKEDTHKMAEANKAFSHFSPKKMQ.

The protein belongs to the universal ribosomal protein uS7 family. Part of the 30S ribosomal subunit. Contacts proteins S9 and S11.

One of the primary rRNA binding proteins, it binds directly to 16S rRNA where it nucleates assembly of the head domain of the 30S subunit. Is located at the subunit interface close to the decoding center, probably blocks exit of the E-site tRNA. The chain is Small ribosomal subunit protein uS7 from Rickettsia akari (strain Hartford).